The primary structure comprises 45 residues: MFKPDFKSRLLYFVLFVDIYGIFTNNIDKIVYKKVDCFKINIFIF.

Residues 10–27 form a helical membrane-spanning segment; it reads LLYFVLFVDIYGIFTNNI.

It localises to the membrane. This is an uncharacterized protein from Dictyostelium discoideum (Social amoeba).